We begin with the raw amino-acid sequence, 299 residues long: 4-hydroxybenzoate octaprenyltransferase (299 aa).

A run of 8 helical transmembrane segments spans residues 33-53, 56-76, 105-125, 151-171, 180-200, 214-234, 247-267, and 278-298; these read VGFL…ADGV, WWTL…GCVI, NALL…LTMN, LPQV…FAAI, WLLY…YAMV, AILF…LMLL, HTYW…FIIA, and AFMH…LATT.

This sequence belongs to the UbiA prenyltransferase family. Requires Mg(2+) as cofactor.

It localises to the cell inner membrane. It carries out the reaction all-trans-octaprenyl diphosphate + 4-hydroxybenzoate = 4-hydroxy-3-(all-trans-octaprenyl)benzoate + diphosphate. It functions in the pathway cofactor biosynthesis; ubiquinone biosynthesis. In terms of biological role, catalyzes the prenylation of para-hydroxybenzoate (PHB) with an all-trans polyprenyl group. Mediates the second step in the final reaction sequence of ubiquinone-8 (UQ-8) biosynthesis, which is the condensation of the polyisoprenoid side chain with PHB, generating the first membrane-bound Q intermediate 3-octaprenyl-4-hydroxybenzoate. The polypeptide is 4-hydroxybenzoate octaprenyltransferase (Xylella fastidiosa (strain M23)).